The primary structure comprises 28 residues: Conotoxin Cl6a (28 aa).

3 disulfide bridges follow: Cys-3–Cys-13, Cys-7–Cys-19, and Cys-12–Cys-24.

Expressed by the venom duct.

It localises to the secreted. The protein is Conotoxin Cl6a of Californiconus californicus (California cone).